The chain runs to 282 residues: Undecaprenyl-diphosphatase (282 aa).

Helical transmembrane passes span 96–116, 123–143, 198–218, 229–249, and 260–280; these read WMVIVGTLPVSIVGLLAKDII, MWITASVLIAFSFVFIAAEKW, FLLAIPAVLASGLFSLPDAFA, QLAVGTGIAFALGYASIAWLL, and FAAYRIPVGLLVMALLATGML.

It belongs to the UppP family.

The protein resides in the cell membrane. The enzyme catalyses di-trans,octa-cis-undecaprenyl diphosphate + H2O = di-trans,octa-cis-undecaprenyl phosphate + phosphate + H(+). In terms of biological role, catalyzes the dephosphorylation of undecaprenyl diphosphate (UPP). Confers resistance to bacitracin. The protein is Undecaprenyl-diphosphatase of Corynebacterium diphtheriae (strain ATCC 700971 / NCTC 13129 / Biotype gravis).